The following is a 361-amino-acid chain: 3-dehydroquinate synthase (361 aa).

Residues 69–74 (DGEEYK), 103–107 (GVIGD), 127–128 (TT), Lys140, Lys149, and 167–170 (TLDT) each bind NAD(+). Zn(2+) contacts are provided by Glu182, His245, and His262.

This sequence belongs to the sugar phosphate cyclases superfamily. Dehydroquinate synthase family. Co(2+) serves as cofactor. The cofactor is Zn(2+). NAD(+) is required as a cofactor.

The protein resides in the cytoplasm. It catalyses the reaction 7-phospho-2-dehydro-3-deoxy-D-arabino-heptonate = 3-dehydroquinate + phosphate. It functions in the pathway metabolic intermediate biosynthesis; chorismate biosynthesis; chorismate from D-erythrose 4-phosphate and phosphoenolpyruvate: step 2/7. Its function is as follows. Catalyzes the conversion of 3-deoxy-D-arabino-heptulosonate 7-phosphate (DAHP) to dehydroquinate (DHQ). This is 3-dehydroquinate synthase from Thioalkalivibrio sulfidiphilus (strain HL-EbGR7).